Reading from the N-terminus, the 477-residue chain is Myosin-binding protein H (477 aa).

Residues 1–73 (MMEKNTSEGP…APPSEDVPSA (73 aa)) are disordered. A phosphothreonine mark is found at Thr-6 and Thr-26. Residues 73-168 (APLLLTLDDV…LDQPIHIREN (96 aa)) form the Fibronectin type-III 1 domain. Positions 172 to 260 (PKIRVPRHLR…EDLEAKAVID (89 aa)) constitute an Ig-like C2-type 1 domain. The Fibronectin type-III 2 domain occupies 269–364 (PPSSIRLLDV…TKELAHIQKA (96 aa)). The region spanning 382 to 466 (PSFTQPLADH…INVLGEASVD (85 aa)) is the Ig-like C2-type 2 domain.

Belongs to the immunoglobulin superfamily. MyBP family. Mainly expressed in the skeletal muscle. Slightly expressed in the left atrium and arteria mammaria interna.

Functionally, binds to myosin; probably involved in interaction with thick myofilaments in the A-band. The protein is Myosin-binding protein H (MYBPH) of Homo sapiens (Human).